Consider the following 284-residue polypeptide: MKLVIVSGRSGSGKSVALRVLEDLGYYCVDNLPLPLIGSLLEQLKGSNDLVAISVDVRNMPEQDKVLVQQLSNLPAGTEITSFFLNSSDKVLLKRYSETRRLHPLSKSRVSLQEAIKLEGKLLEPMSKLVDHYIDTSNLNIYDLSDQVRQILLGSVDKELVIYFESFGFKNGMPTEADFMFDVRFLPNPHWELALRPLTGLDEPVAEFLNRQPLVNKFIWQIENLLETWLPHLERNNRSYLTIAIGCTGGQHRSVYVAEQLAKRFSNGKHKVNVRHRELDHAKA.

An ATP-binding site is contributed by 8 to 15 (GRSGSGKS). Position 56-59 (56-59 (DVRN)) interacts with GTP.

Belongs to the RapZ-like family.

Functionally, displays ATPase and GTPase activities. The polypeptide is Nucleotide-binding protein Sputw3181_3461 (Shewanella sp. (strain W3-18-1)).